A 287-amino-acid polypeptide reads, in one-letter code: Glutamate racemase (287 aa).

Residues 1–15 (MATKPQDANTTSREA) are compositionally biased toward polar residues. Positions 1-25 (MATKPQDANTTSREAITSKADSPPR) are disordered. Substrate contacts are provided by residues 32–33 (DS) and 64–65 (YG). The Proton donor/acceptor role is filled by Cys96. 97–98 (NT) provides a ligand contact to substrate. The active-site Proton donor/acceptor is Cys208. 209 to 210 (TH) is a substrate binding site.

Belongs to the aspartate/glutamate racemases family.

The catalysed reaction is L-glutamate = D-glutamate. It functions in the pathway cell wall biogenesis; peptidoglycan biosynthesis. Provides the (R)-glutamate required for cell wall biosynthesis. The chain is Glutamate racemase from Yersinia pseudotuberculosis serotype O:1b (strain IP 31758).